Consider the following 149-residue polypeptide: uncharacterized protein (149 aa).

A run of 3 helical transmembrane segments spans residues 39–61, 82–104, and 119–141; these read VPLG…LIIG, VFGY…GAIL, and WMMM…SIYL.

It to M.pneumoniae MPN_090.

The protein resides in the cell membrane. This is an uncharacterized protein from Mycoplasma pneumoniae (strain ATCC 29342 / M129 / Subtype 1) (Mycoplasmoides pneumoniae).